The chain runs to 243 residues: Biosynthetic peptidoglycan transglycosylase (243 aa).

The helical transmembrane segment at Leu-21–Asp-43 threads the bilayer.

This sequence belongs to the glycosyltransferase 51 family.

Its subcellular location is the cell inner membrane. It catalyses the reaction [GlcNAc-(1-&gt;4)-Mur2Ac(oyl-L-Ala-gamma-D-Glu-L-Lys-D-Ala-D-Ala)](n)-di-trans,octa-cis-undecaprenyl diphosphate + beta-D-GlcNAc-(1-&gt;4)-Mur2Ac(oyl-L-Ala-gamma-D-Glu-L-Lys-D-Ala-D-Ala)-di-trans,octa-cis-undecaprenyl diphosphate = [GlcNAc-(1-&gt;4)-Mur2Ac(oyl-L-Ala-gamma-D-Glu-L-Lys-D-Ala-D-Ala)](n+1)-di-trans,octa-cis-undecaprenyl diphosphate + di-trans,octa-cis-undecaprenyl diphosphate + H(+). Its pathway is cell wall biogenesis; peptidoglycan biosynthesis. In terms of biological role, peptidoglycan polymerase that catalyzes glycan chain elongation from lipid-linked precursors. This is Biosynthetic peptidoglycan transglycosylase from Xylella fastidiosa (strain Temecula1 / ATCC 700964).